A 1056-amino-acid polypeptide reads, in one-letter code: Sucrose-phosphate synthase (1056 aa).

Residues 112-123 are compositionally biased toward basic and acidic residues; sequence HVERERGRREAT. The interval 112-132 is disordered; sequence HVERERGRREATADMSEDLSE. Phosphoserine occurs at positions 158 and 424. The segment at 681 to 700 is disordered; that stretch reads NWQRIDEGSENSDTDSAGDS.

It belongs to the glycosyltransferase 1 family. As to quaternary structure, homodimer or homotetramer. Post-translationally, phosphorylated at Ser-158 and Ser-424.

The catalysed reaction is beta-D-fructose 6-phosphate + UDP-alpha-D-glucose = sucrose 6(F)-phosphate + UDP + H(+). It functions in the pathway glycan biosynthesis; sucrose biosynthesis; sucrose from D-fructose 6-phosphate and UDP-alpha-D-glucose: step 1/2. With respect to regulation, activity is regulated by phosphorylation and moderated by concentration of metabolites and light. Its function is as follows. Plays a role in photosynthetic sucrose synthesis by catalyzing the rate-limiting step of sucrose biosynthesis from UDP-glucose and fructose- 6-phosphate. Involved in the regulation of carbon partitioning in the leaves of plants. May regulate the synthesis of sucrose and therefore play a major role as a limiting factor in the export of photoassimilates out of the leaf. Plays a role for sucrose availability that is essential for plant growth and fiber elongation. In Spinacia oleracea (Spinach), this protein is Sucrose-phosphate synthase (SPS1).